A 160-amino-acid chain; its full sequence is Cytochrome b6-f complex subunit 4 (160 aa).

The next 3 helical transmembrane spans lie at 36 to 56, 95 to 115, and 131 to 151; these read LLYIFPVVILGTIACNVGLAV, LLGVLLMVSVPVGLLTVPFLE, and TVFLIGTAVALWLGIGATLPI.

It belongs to the cytochrome b family. PetD subfamily. The 4 large subunits of the cytochrome b6-f complex are cytochrome b6, subunit IV (17 kDa polypeptide, petD), cytochrome f and the Rieske protein, while the 4 small subunits are petG, petL, petM and petN. The complex functions as a dimer.

The protein resides in the plastid. It localises to the chloroplast thylakoid membrane. In terms of biological role, component of the cytochrome b6-f complex, which mediates electron transfer between photosystem II (PSII) and photosystem I (PSI), cyclic electron flow around PSI, and state transitions. The protein is Cytochrome b6-f complex subunit 4 of Daucus carota (Wild carrot).